We begin with the raw amino-acid sequence, 287 residues long: mRNA-capping enzyme small subunit (287 aa).

As to quaternary structure, heterodimer of a large and a small subunit.

Its subcellular location is the virion. It carries out the reaction a 5'-end (5'-triphosphoguanosine)-ribonucleoside in mRNA + S-adenosyl-L-methionine = a 5'-end (N(7)-methyl 5'-triphosphoguanosine)-ribonucleoside in mRNA + S-adenosyl-L-homocysteine. Its function is as follows. Catalyzes the last reaction in the mRNA cap formation pathway. The sequence is that of mRNA-capping enzyme small subunit from Sus scrofa (Pig).